We begin with the raw amino-acid sequence, 149 residues long: Large ribosomal subunit protein uL15 (149 aa).

The segment at 1–57 (MRLNDPKPKTGSQHRRRRVGRGIAAGQGASCGFGMRGQKSRSGRPTRPGFEGGQNPL) is disordered. A compositionally biased stretch (gly residues) spans 23 to 35 (IAAGQGASCGFGM).

This sequence belongs to the universal ribosomal protein uL15 family. Part of the 50S ribosomal subunit.

Its function is as follows. Binds to the 23S rRNA. This chain is Large ribosomal subunit protein uL15, found in Acaryochloris marina (strain MBIC 11017).